An 87-amino-acid chain; its full sequence is Phosphoribosyl-ATP pyrophosphatase (87 aa).

Belongs to the PRA-PH family.

Its subcellular location is the cytoplasm. It catalyses the reaction 1-(5-phospho-beta-D-ribosyl)-ATP + H2O = 1-(5-phospho-beta-D-ribosyl)-5'-AMP + diphosphate + H(+). Its pathway is amino-acid biosynthesis; L-histidine biosynthesis; L-histidine from 5-phospho-alpha-D-ribose 1-diphosphate: step 2/9. This is Phosphoribosyl-ATP pyrophosphatase (hisE) from Corynebacterium glutamicum (strain ATCC 13032 / DSM 20300 / JCM 1318 / BCRC 11384 / CCUG 27702 / LMG 3730 / NBRC 12168 / NCIMB 10025 / NRRL B-2784 / 534).